The chain runs to 630 residues: Cytochrome B pre-mRNA-processing protein 2 (630 aa).

It localises to the mitochondrion. Its function is as follows. Appears to be specifically required for the splicing of the terminal intron (bI5) of the cytochrome b pre-mRNA. Can also stimulates the splicing of the omega intron of the precursor of large ribosomal RNA. The chain is Cytochrome B pre-mRNA-processing protein 2 (CBP2) from Saccharomyces paradoxus (Yeast).